The primary structure comprises 60 residues: Toxin 4.9.6 (60 aa).

4 disulfides stabilise this stretch: Cys-3/Cys-22, Cys-17/Cys-38, Cys-40/Cys-52, and Cys-53/Cys-58.

The protein belongs to the three-finger toxin family. Short-chain subfamily. Orphan group XI sub-subfamily. As to expression, expressed by the venom gland.

It is found in the secreted. In Dendroaspis viridis (Western green mamba), this protein is Toxin 4.9.6.